Reading from the N-terminus, the 409-residue chain is O-methyltransferase pyiA (409 aa).

A compositionally biased stretch (polar residues) spans 1 to 21; the sequence is MASQDGTTELLSQSVNSTCIP. The segment at 1–46 is disordered; sequence MASQDGTTELLSQSVNSTCIPGSTYHVDRGRASSASTPPTSPPLSE. D271 provides a ligand contact to S-adenosyl-L-methionine. H317 (proton acceptor) is an active-site residue.

This sequence belongs to the class I-like SAM-binding methyltransferase superfamily. Cation-independent O-methyltransferase family.

The protein operates within mycotoxin biosynthesis. Its function is as follows. O-methyltransferase; part of the gene cluster that mediates the biosynthesis of the mycotoxin pyrichalasin H, a tyrosine-derived cytochalasan that inhibits the growth of rice seedlings, but also inhibits lymphocyte capping and actin polymerization and alters cell morphology. Pyrichalasin H is indicated as the responsible agent for the genus-specific pathogenicity of M.grisea toward crabgrass. The first step in the pathway is catalyzed by the O-methyltransferase pyiA which methylates free tyrosine to generate the precursor O-methyltyrosine. The hybrid PKS-NRPS pyiS, assisted by the enoyl reductase pyiC, are responsible for fusion of the O-methyltyrosine precursor and the polyketide backbone. The polyketide synthase module (PKS) of pyiS is responsible for the synthesis of the polyketide backbone and the downstream nonribosomal peptide synthetase (NRPS) amidates the carboxyl end of the polyketide with the O-methyltyrosine precursor. As the NRPS A-domain demonstrates substrate tolerance, pyiS can also use phenylalanine, tyrosine and even para-chlorophenylalanine as amino acid precursor, which leads to the production of novel cytochalasans, including halogenated cytochalasans. Because pyiS lacks a designated enoylreductase (ER) domain, the required activity is provided the enoyl reductase pyiC. Reduction by the hydrolyase pyiE leads to 1,5-dihydropyrrolone, which is substrate for dehydration and intra-molecular Diels-Alder cyclization by the Diels-Alderase pyiF to yield the required isoindolone-fused macrocycle. The tailoring cytochrome P450 monooxygenases piyD and piyG catalyze the hydroxylation at C-18 and C-7, respectivily, whereas the short-chain dehydrogenase/reductase pyiH reduces the carbonyl at C-21 in preparation for the transfer of an acetyl group by the acetyltransferase pyiB. These 3 reactions whose order is not clear yet, lead to the production of O-methylpyrichalasin J, a deacetylated pyrichalasin H. Finally, pyiB to converts O-methylpyrichalasin J into the final product pyrichalasin H via acetylation of C-21. The sequence is that of O-methyltransferase pyiA from Pyricularia grisea (Crabgrass-specific blast fungus).